The chain runs to 306 residues: Protein FdhE homolog (306 aa).

Belongs to the FdhE family.

It localises to the cytoplasm. In terms of biological role, necessary for formate dehydrogenase activity. This chain is Protein FdhE homolog, found in Proteus mirabilis (strain HI4320).